A 729-amino-acid polypeptide reads, in one-letter code: Solute carrier family 15 member 2 (729 aa).

The disordered stretch occupies residues 1–34 (MNPFQQNESKETLFSPVSTEETPPRLSSPAKKTP). Residues 1 to 57 (MNPFQQNESKETLFSPVSTEETPPRLSSPAKKTPPKICGSNYPLSIAFIVVNEFCER) lie on the Cytoplasmic side of the membrane. Serine 9 is subject to Phosphoserine. Threonine 12 carries the phosphothreonine modification. Phosphoserine is present on serine 28. The helical transmembrane segment at 58-78 (FSYYGMKAVLTLYFLYFLHWN) threads the bilayer. The Extracellular segment spans residues 79–87 (EDTSTSVYH). Residues 88-108 (AFSSLCYFTPILGAAIADSWL) traverse the membrane as a helical segment. Residues 109–113 (GKFKT) are Cytoplasmic-facing. Residues 114–134 (IIYLSLVNVLGHVIKSLSAFP) form a helical membrane-spanning segment. At 135-139 (ILGGK) the chain is on the extracellular side. The chain crosses the membrane as a helical span at residues 140-160 (VVHTVLSLVGLCLIALGTGGI). The Cytoplasmic portion of the chain corresponds to 161-183 (KPCVAAFGGDQFEEKHAEERTRY). Residues 184 to 204 (FSGFYLAINAGSLISTFITPM) traverse the membrane as a helical segment. The Extracellular portion of the chain corresponds to 205–217 (LRGDVQCFGEDCY). Residues 218–238 (ALAFGVPGLLMVIALVVFAMG) form a helical membrane-spanning segment. The Cytoplasmic segment spans residues 239–295 (SKMYKKPPPEGNIVAQVVKCIWFAISNRFKNRSEDIPKRQHWLDWAAEKYPKQLIMD). A helical transmembrane segment spans residues 296–316 (VKTLTRVLFLYIPLPMFWALL). Over 317-343 (DQQGSRWTLQATKMNGNLGFFVLQPDQ) the chain is Extracellular. The chain crosses the membrane as a helical span at residues 344–364 (MQVLNPLLVLIFIPLFDLVIY). Residues 365–380 (RLISKCGINFTSLRKM) lie on the Cytoplasmic side of the membrane. A helical membrane pass occupies residues 381–401 (AVGMVLACLAFAAAATVEIKI). Residues 402–611 (NEMAPPQPGS…PANKVSIAWQ (210 aa)) lie on the Extracellular side of the membrane. Residues 402-611 (NEMAPPQPGS…PANKVSIAWQ (210 aa)) are extracellular domain (ECD). N-linked (GlcNAc...) asparagine glycosylation is found at asparagine 435, asparagine 472, asparagine 508, asparagine 528, and asparagine 587. The helical transmembrane segment at 612–632 (LPQYALVTAGEVMFSVTGLEF) threads the bilayer. Over 633-643 (SYSQAPSSMKS) the chain is Cytoplasmic. The helical transmembrane segment at 644–664 (VLQAAWLLTVAIGNIIVLVVA) threads the bilayer. The Extracellular portion of the chain corresponds to 665–674 (QFSGLVQWAE). Residues 675–695 (FVLFSCLLLVVCLIFSIMGYY) traverse the membrane as a helical segment. Topologically, residues 696–729 (YIPIKSEDIQGPEDKQIPHMQGNMINLETKKTKL) are cytoplasmic.

Belongs to the major facilitator superfamily. Proton-dependent oligopeptide transporter (POT/PTR) (TC 2.A.17) family. In terms of assembly, interacts (via extracellular domain region) with trypsin. Strongly expressed in kidney. Also detected in brain, lung, liver and heart.

Its subcellular location is the apical cell membrane. The protein resides in the cytoplasmic vesicle. It localises to the phagosome membrane. The protein localises to the cell membrane. The enzyme catalyses a dipeptide(out) + 2 H(+)(out) = a dipeptide(in) + 2 H(+)(in). The catalysed reaction is N-acetyl-D-muramoyl-L-alanyl-D-isoglutamine(out) + 3 H(+)(out) = N-acetyl-D-muramoyl-L-alanyl-D-isoglutamine(in) + 3 H(+)(in). It carries out the reaction glycyl-L-leucine(out) + 2 H(+)(out) = glycyl-L-leucine(in) + 2 H(+)(in). It catalyses the reaction glycyl-L-lysine(out) + 2 H(+)(out) = glycyl-L-lysine(in) + 2 H(+)(in). The enzyme catalyses glycyl-L-glutamate(out) + 3 H(+)(out) = glycyl-L-glutamate(in) + 3 H(+)(in). The catalysed reaction is L-alanyl-L-alanine(out) + 2 H(+)(out) = L-alanyl-L-alanine(in) + 2 H(+)(in). It carries out the reaction an L-amino acid tripeptide(out) + 2 H(+)(out) = an L-amino acid tripeptide(in) + 2 H(+)(in). It catalyses the reaction carnosine(out) + 2 H(+)(out) = carnosine(in) + 2 H(+)(in). Its function is as follows. Proton-coupled amino-acid transporter that transports oligopeptides of 2 to 4 amino acids with a preference for dipeptides. Transports neutral and anionic dipeptides with a proton to peptide stoichiometry of 2:1 or 3:1. In kidney, involved in the absorption of circulating di- and tripeptides from the glomerular filtrate. Can also transport beta-lactam antibiotics, such as the aminocephalosporin cefadroxil, and other antiviral and anticancer drugs. Transports the dipeptide-like aminopeptidase inhibitor bestatin. Also able to transport carnosine. Involved in innate immunity by promoting the detection of microbial pathogens by NOD-like receptors (NLRs). Mediates transport of bacterial peptidoglycans across the plasma membrane or, in macrophages, the phagosome membrane: catalyzes the transport of certain bacterial peptidoglycans, such as muramyl dipeptide (MDP), the NOD2 ligand. This is Solute carrier family 15 member 2 from Oryctolagus cuniculus (Rabbit).